The following is a 390-amino-acid chain: Stearoyl-[acyl-carrier-protein] 9-desaturase, chloroplastic (390 aa).

The transit peptide at 1-27 (MALKLCFPPHKMPSFPDARIRSHRVFM) directs the protein to the chloroplast. Fe cation-binding residues include Glu132, Glu170, His173, Glu223, Glu256, and His259.

This sequence belongs to the fatty acid desaturase type 2 family. Homodimer. The cofactor is Fe(2+).

The protein resides in the plastid. It is found in the chloroplast. It carries out the reaction octadecanoyl-[ACP] + 2 reduced [2Fe-2S]-[ferredoxin] + O2 + 2 H(+) = (9Z)-octadecenoyl-[ACP] + 2 oxidized [2Fe-2S]-[ferredoxin] + 2 H2O. Its pathway is lipid metabolism; fatty acid metabolism. In terms of biological role, converts stearoyl-ACP to oleoyl-ACP by introduction of a cis double bond between carbons 9 and 10 of the acyl chain. The chain is Stearoyl-[acyl-carrier-protein] 9-desaturase, chloroplastic from Olea europaea (Common olive).